The sequence spans 196 residues: Adenylate kinase (196 aa).

ATP is bound at residue 9-17; the sequence is GIPGVGKST.

It belongs to the archaeal adenylate kinase family.

Its subcellular location is the cytoplasm. The enzyme catalyses AMP + ATP = 2 ADP. In Thermococcus kodakarensis (strain ATCC BAA-918 / JCM 12380 / KOD1) (Pyrococcus kodakaraensis (strain KOD1)), this protein is Adenylate kinase.